The sequence spans 55 residues: Large ribosomal subunit protein bL33 (55 aa).

Positions 1–11 (MAKGSREKIKL) are enriched in basic and acidic residues. A disordered region spans residues 1 to 32 (MAKGSREKIKLESSASTGHFYTTSKNKRTKPE). The span at 13–24 (SSASTGHFYTTS) shows a compositional bias: polar residues.

This sequence belongs to the bacterial ribosomal protein bL33 family.

This is Large ribosomal subunit protein bL33 from Polynucleobacter necessarius subsp. necessarius (strain STIR1).